The primary structure comprises 482 residues: tRNA sulfurtransferase (482 aa).

Residues 61-165 (AAIVAELTRI…DERLILVTAR (105 aa)) enclose the THUMP domain. ATP is bound by residues 183 to 184 (LI), Lys-265, Gly-287, and Gln-296. Cysteines 344 and 456 form a disulfide. The Rhodanese domain occupies 404 to 482 (FSHNDVILDI…GFKNVKVYRP (79 aa)). The active-site Cysteine persulfide intermediate is Cys-456.

The protein belongs to the ThiI family.

The protein localises to the cytoplasm. It carries out the reaction [ThiI sulfur-carrier protein]-S-sulfanyl-L-cysteine + a uridine in tRNA + 2 reduced [2Fe-2S]-[ferredoxin] + ATP + H(+) = [ThiI sulfur-carrier protein]-L-cysteine + a 4-thiouridine in tRNA + 2 oxidized [2Fe-2S]-[ferredoxin] + AMP + diphosphate. It catalyses the reaction [ThiS sulfur-carrier protein]-C-terminal Gly-Gly-AMP + S-sulfanyl-L-cysteinyl-[cysteine desulfurase] + AH2 = [ThiS sulfur-carrier protein]-C-terminal-Gly-aminoethanethioate + L-cysteinyl-[cysteine desulfurase] + A + AMP + 2 H(+). It functions in the pathway cofactor biosynthesis; thiamine diphosphate biosynthesis. In terms of biological role, catalyzes the ATP-dependent transfer of a sulfur to tRNA to produce 4-thiouridine in position 8 of tRNAs, which functions as a near-UV photosensor. Also catalyzes the transfer of sulfur to the sulfur carrier protein ThiS, forming ThiS-thiocarboxylate. This is a step in the synthesis of thiazole, in the thiamine biosynthesis pathway. The sulfur is donated as persulfide by IscS. In Erwinia tasmaniensis (strain DSM 17950 / CFBP 7177 / CIP 109463 / NCPPB 4357 / Et1/99), this protein is tRNA sulfurtransferase.